The following is a 372-amino-acid chain: sn-glycerol-3-phosphate import ATP-binding protein UgpC (372 aa).

An ABC transporter domain is found at 2–233; that stretch reads LDIKQLVKTY…PASTFVASFI (232 aa). 35–42 contacts ATP; that stretch reads GPSGCGKS.

The protein belongs to the ABC transporter superfamily. sn-glycerol-3-phosphate importer (TC 3.A.1.1.3) family. In terms of assembly, the complex is composed of two ATP-binding proteins (UgpC), two transmembrane proteins (UgpA and UgpE) and a solute-binding protein (UgpB).

The protein resides in the cell inner membrane. The enzyme catalyses sn-glycerol 3-phosphate(out) + ATP + H2O = sn-glycerol 3-phosphate(in) + ADP + phosphate + H(+). Functionally, part of the ABC transporter complex UgpBAEC involved in sn-glycerol-3-phosphate (G3P) import. Responsible for energy coupling to the transport system. This Vibrio cholerae serotype O1 (strain ATCC 39315 / El Tor Inaba N16961) protein is sn-glycerol-3-phosphate import ATP-binding protein UgpC.